The chain runs to 69 residues: MKAQFAILVISMMLLQLIVQTESGFLGNLWEGIKTALGKRGLRNLDDFQDFLDSDTSDADLRMLRDMFR.

A signal peptide spans 1-23; sequence MKAQFAILVISMMLLQLIVQTES. At L37 the chain carries Leucine amide. A propeptide spanning residues 38-69 is cleaved from the precursor; it reads GKRGLRNLDDFQDFLDSDTSDADLRMLRDMFR.

Belongs to the non-disulfide-bridged peptide (NDBP) superfamily. Short antimicrobial peptide (group 4) family. Expressed by the venom gland.

It is found in the secreted. Functionally, probable antimicrobial peptide. Shows low inhibitory activity against herpes simplex virus type 1 (HSV-1). This is Antimicrobial peptide Eval36 from Euscorpiops validus (Scorpion).